The primary structure comprises 296 residues: Light-inducible protein CPRF3 (296 aa).

Disordered regions lie at residues 1–27, 98–165, and 190–223; these read MSDG…ITTT, PNLA…GSLE, and RVND…KSDE. Residues 107-117 show a composition bias toward basic and acidic residues; that stretch reads VGRKISDEKGR. A compositionally biased stretch (low complexity) spans 145–156; it reads SSSDNDCPSLSS. The region spanning 196–259 is the bZIP domain; that stretch reads ELKRQRRKQS…AEVTSENHSI (64 aa). Positions 198–220 are basic motif; the sequence is KRQRRKQSNRESARRSRLRKQAK. A leucine-zipper region spans residues 224–245; that stretch reads LQERLDNLSKENRILRKNLQRI.

This sequence belongs to the bZIP family. In terms of assembly, binds DNA as a dimer.

The protein resides in the nucleus. In terms of biological role, binds to the G-box-like motif (5'-ACGTGGC-3') of the chalcone synthase (CHS) gene promoter. G-box and G-box-like motifs are defined in promoters of certain plant genes which are regulated by such diverse stimuli as light-induction or hormone control. The sequence is that of Light-inducible protein CPRF3 (CPRF3) from Petroselinum crispum (Parsley).